The primary structure comprises 144 residues: Protein SprT-like (144 aa).

One can recognise a SprT-like domain in the interval 4-143 (NKYVQEVSLQ…GKCRGKLTLK (140 aa)). Position 64 (histidine 64) interacts with Zn(2+). The active site involves glutamate 65. Position 68 (histidine 68) interacts with Zn(2+).

This sequence belongs to the SprT family. Zn(2+) is required as a cofactor.

It is found in the cytoplasm. The polypeptide is Protein SprT-like (Streptococcus suis (strain 98HAH33)).